A 441-amino-acid polypeptide reads, in one-letter code: Proline--tRNA ligase (441 aa).

This sequence belongs to the class-II aminoacyl-tRNA synthetase family. ProS type 2 subfamily. Homodimer.

It is found in the cytoplasm. It carries out the reaction tRNA(Pro) + L-proline + ATP = L-prolyl-tRNA(Pro) + AMP + diphosphate. Functionally, catalyzes the attachment of proline to tRNA(Pro) in a two-step reaction: proline is first activated by ATP to form Pro-AMP and then transferred to the acceptor end of tRNA(Pro). The protein is Proline--tRNA ligase of Bartonella quintana (strain Toulouse) (Rochalimaea quintana).